The following is a 295-amino-acid chain: Phosphatidylserine decarboxylase proenzyme (295 aa).

Active-site charge relay system; for autoendoproteolytic cleavage activity residues include aspartate 113, histidine 169, and serine 256. Catalysis depends on serine 256, which acts as the Schiff-base intermediate with substrate; via pyruvic acid; for decarboxylase activity. Residue serine 256 is modified to Pyruvic acid (Ser); by autocatalysis.

The protein belongs to the phosphatidylserine decarboxylase family. PSD-B subfamily. Prokaryotic type II sub-subfamily. As to quaternary structure, heterodimer of a large membrane-associated beta subunit and a small pyruvoyl-containing alpha subunit. Pyruvate is required as a cofactor. Is synthesized initially as an inactive proenzyme. Formation of the active enzyme involves a self-maturation process in which the active site pyruvoyl group is generated from an internal serine residue via an autocatalytic post-translational modification. Two non-identical subunits are generated from the proenzyme in this reaction, and the pyruvate is formed at the N-terminus of the alpha chain, which is derived from the carboxyl end of the proenzyme. The autoendoproteolytic cleavage occurs by a canonical serine protease mechanism, in which the side chain hydroxyl group of the serine supplies its oxygen atom to form the C-terminus of the beta chain, while the remainder of the serine residue undergoes an oxidative deamination to produce ammonia and the pyruvoyl prosthetic group on the alpha chain. During this reaction, the Ser that is part of the protease active site of the proenzyme becomes the pyruvoyl prosthetic group, which constitutes an essential element of the active site of the mature decarboxylase.

The protein resides in the cell membrane. It catalyses the reaction a 1,2-diacyl-sn-glycero-3-phospho-L-serine + H(+) = a 1,2-diacyl-sn-glycero-3-phosphoethanolamine + CO2. Its pathway is phospholipid metabolism; phosphatidylethanolamine biosynthesis; phosphatidylethanolamine from CDP-diacylglycerol: step 2/2. Functionally, catalyzes the formation of phosphatidylethanolamine (PtdEtn) from phosphatidylserine (PtdSer). The polypeptide is Phosphatidylserine decarboxylase proenzyme (Clostridium botulinum (strain ATCC 19397 / Type A)).